The primary structure comprises 807 residues: Spondin-1 (807 aa).

Residues 1-28 (MRLSPAPLKLSRTPALLALALPLAAALA) form the signal peptide. Residues 29–194 (FSDETLDKVP…DSTFDGVTDK (166 aa)) form the Reelin domain. 17 disulfides stabilise this stretch: cysteine 44-cysteine 128, cysteine 156-cysteine 182, cysteine 199-cysteine 336, cysteine 200-cysteine 340, cysteine 202-cysteine 415, cysteine 443-cysteine 480, cysteine 454-cysteine 489, cysteine 459-cysteine 494, cysteine 502-cysteine 538, cysteine 513-cysteine 517, cysteine 548-cysteine 554, cysteine 559-cysteine 595, cysteine 570-cysteine 574, cysteine 605-cysteine 610, cysteine 615-cysteine 650, cysteine 626-cysteine 630, and cysteine 660-cysteine 665. Residues 195–388 (PILDCCACGT…LTSLDHPQSP (194 aa)) enclose the Spondin domain. N-linked (GlcNAc...) asparagine glycosylation is present at asparagine 214. Residues aspartate 325, aspartate 354, and aspartate 358 each contribute to the Ca(2+) site. TSP type-1 domains lie at 442 to 495 (TCIY…PGCS), 501 to 555 (TCTM…EECS), 558 to 611 (SCLM…PECH), 614 to 666 (PCLL…PECP), 668 to 721 (DCEL…RKCL), and 754 to 806 (GCRM…NVHP). Tryptophan 448 carries C-linked (Man) tryptophan glycosylation. C-linked (Man) tryptophan; partial glycosylation occurs at tryptophan 451. Tryptophan 507 carries C-linked (Man) tryptophan glycosylation. Tryptophan 510 is a glycosylation site (C-linked (Man) tryptophan; partial). C-linked (Man) tryptophan glycosylation occurs at tryptophan 564. C-linked (Man) tryptophan; partial glycosylation occurs at tryptophan 620. A glycan (C-linked (Man) tryptophan) is linked at tryptophan 623. Tryptophan 674 carries a C-linked (Man) tryptophan glycan. Asparagine 681 is a glycosylation site (N-linked (GlcNAc...) asparagine).

In terms of assembly, binds to the central extracellular domain of APP and inhibits beta-secretase cleavage of APP. In terms of tissue distribution, highest expression in lung, lower expression in brain, heart, kidney, liver and testis, and lowest expression in pancreas, skeletal muscle and ovary. Not expressed in spleen.

The protein localises to the secreted. It is found in the extracellular space. Its subcellular location is the extracellular matrix. In terms of biological role, cell adhesion protein that promotes the attachment of spinal cord and sensory neuron cells and the outgrowth of neurites in vitro. May contribute to the growth and guidance of axons in both the spinal cord and the PNS. Major factor for vascular smooth muscle cell. This chain is Spondin-1 (SPON1), found in Homo sapiens (Human).